A 327-amino-acid chain; its full sequence is Phenylalanine--tRNA ligase alpha subunit (327 aa).

E252 is a Mg(2+) binding site.

This sequence belongs to the class-II aminoacyl-tRNA synthetase family. Phe-tRNA synthetase alpha subunit type 1 subfamily. As to quaternary structure, tetramer of two alpha and two beta subunits. Mg(2+) serves as cofactor.

It is found in the cytoplasm. It catalyses the reaction tRNA(Phe) + L-phenylalanine + ATP = L-phenylalanyl-tRNA(Phe) + AMP + diphosphate + H(+). This chain is Phenylalanine--tRNA ligase alpha subunit, found in Shigella sonnei (strain Ss046).